The following is a 332-amino-acid chain: MQLETQDALYVALELAIAALSVAGNVLVCAAVGTSSALQTPTNYFLVSLAAADVAVGLFAIPFAITISLGFCTDFHSCLFLACFVLVLTQSSIFSLLAVAVDRYLAIRVPLRYKSLVTGTRARGVIAVLWVLAFGIGLTPFLGWNSKDSATNCTEPWDGTTNESCCLVKCLFENVVPMSYMVYFNFFGCVLPPLLIMLVIYIKIFMVACKQLQRTELVDHSRTVIQREIHAAKSLAMIVGIFALCWLPVHAINCVTLFQPARAKDKPKWAMNMAILLSHASSVVNPIVYAYRNRDFRYTFHKIISRYVLCQTDVLKSGNGQAGTQSALDVGL.

Topologically, residues M1–A8 are extracellular. Residues L9–G33 traverse the membrane as a helical segment. Topologically, residues T34–N43 are cytoplasmic. The chain crosses the membrane as a helical span at residues Y44–I67. At S68–C78 the chain is on the extracellular side. Residues C78 and C170 are joined by a disulfide bond. The chain crosses the membrane as a helical span at residues L79–V101. The Cytoplasmic segment spans residues D102–R121. A helical transmembrane segment spans residues A122–W144. The Extracellular segment spans residues N145–P177. N152 and N162 each carry an N-linked (GlcNAc...) asparagine glycan. Position 173 (E173) interacts with adenosine. The helical transmembrane segment at M178–I202 threads the bilayer. Residues K203–S234 are Cytoplasmic-facing. Residues L235 to F258 form a helical membrane-spanning segment. N253 provides a ligand contact to adenosine. Residues Q259–K266 are Extracellular-facing. The chain crosses the membrane as a helical span at residues P267–A290. The adenosine site is built by S278 and H279. Residues Y291 to L332 lie on the Cytoplasmic side of the membrane. C310 is lipidated: S-palmitoyl cysteine.

Belongs to the G-protein coupled receptor 1 family.

It localises to the cell membrane. Receptor for adenosine. The activity of this receptor is mediated by G proteins which activate adenylyl cyclase. The sequence is that of Adenosine receptor A2b (ADORA2B) from Canis lupus familiaris (Dog).